A 1122-amino-acid chain; its full sequence is Cytosolic carboxypeptidase 4 (1122 aa).

Residues Pro287–Gly338 form a disordered region. Acidic residues predominate over residues Thr299–Lys313. In terms of domain architecture, Peptidase M14 spans Tyr731–Glu1021. The Zn(2+) site is built by His803, Glu806, and His900. Glu985 functions as the Proton donor/acceptor in the catalytic mechanism. The interval Cys1099–Thr1122 is disordered.

Belongs to the peptidase M14 family. Interacts with MYLK. Interacts with TCF4. It depends on Zn(2+) as a cofactor. In terms of tissue distribution, widely expressed at low level. Expressed in eye, muscle, pituitary, testis and to a lower extent in brain.

It localises to the cytoplasm. The protein localises to the cytosol. It carries out the reaction (L-glutamyl)(n+1)-gamma-L-glutamyl-L-glutamyl-[protein] + H2O = (L-glutamyl)(n)-gamma-L-glutamyl-L-glutamyl-[protein] + L-glutamate. The catalysed reaction is C-terminal L-alpha-aminoacyl-L-glutamyl-L-glutamyl-[tubulin] + H2O = C-terminal L-alpha-aminoacyl-L-glutamyl-[tubulin] + L-glutamate. Functionally, metallocarboxypeptidase that mediates deglutamylation of tubulin and non-tubulin target proteins. Catalyzes the removal of polyglutamate side chains present on the gamma-carboxyl group of glutamate residues within the C-terminal tail of tubulin protein. Specifically cleaves tubulin long-side-chains, while it is not able to remove the branching point glutamate. Also catalyzes the removal of polyglutamate residues from the carboxy-terminus of non-tubulin proteins such as MYLK. This chain is Cytosolic carboxypeptidase 4, found in Mus musculus (Mouse).